Reading from the N-terminus, the 170-residue chain is Fluoride-specific ion channel FluC 2 (170 aa).

The next 4 membrane-spanning stretches (helical) occupy residues 8–28, 55–75, 84–104, and 114–134; these read ALVF…TVWI, IALL…VGMI, TFWG…AAAV, and ILIG…AAAM. Na(+) is bound by residues G92 and T95.

The protein belongs to the fluoride channel Fluc/FEX (TC 1.A.43) family.

It localises to the cell membrane. It carries out the reaction fluoride(in) = fluoride(out). Na(+) is not transported, but it plays an essential structural role and its presence is essential for fluoride channel function. Its function is as follows. Fluoride-specific ion channel. Important for reducing fluoride concentration in the cell, thus reducing its toxicity. The protein is Fluoride-specific ion channel FluC 2 of Corynebacterium jeikeium (strain K411).